A 515-amino-acid polypeptide reads, in one-letter code: Microtubule-associated protein 70-4 (515 aa).

2 coiled-coil regions span residues valine 26–alanine 106 and leucine 136–alanine 351. The segment at leucine 208 to alanine 410 is required for targeting to microtubules. The interval aspartate 340–isoleucine 515 is disordered. Residues glutamate 345 to alanine 362 are compositionally biased toward polar residues. Residues proline 364–proline 374 show a composition bias toward low complexity. 3 stretches are compositionally biased toward basic and acidic residues: residues alanine 409 to arginine 425, lysine 450 to glutamate 461, and serine 484 to isoleucine 515.

This sequence belongs to the MAP70 family.

It localises to the cytoplasm. Its subcellular location is the cytoskeleton. Its function is as follows. Plant-specific protein that interact with microtubules. The sequence is that of Microtubule-associated protein 70-4 (MAP70.4) from Oryza sativa subsp. japonica (Rice).